We begin with the raw amino-acid sequence, 487 residues long: MEKSKNIWSLILTEIKKELSEEEFYVWFENLCFLESIGDNIKISTPNLFHKNQIEKRFTKKIKEILIKNGYNNIVIVFTNQPPKTHSNKQETKNPALNETFSKFDKLKEKTTSKEAIQNIQDRIKMYIKKEEEEEPTNFKNPFLKKRYTFENFIIGPNNKLAYNASLSISKNPGKKYNPCLIYGGVGLGKTHLLQSIGNKTEELHHNLKILYVTAENFLNEFVESIKTHETKKFKKKYRYLDMLLIDDIHDLQKKEGIQEELFHTFNALYEDNKQLVFTCDRSPSELTNFTDRLKSRFTRGLNVDISKPNFELRAAIVEKKAEEDGINVPKNILNLVAQKVTTNVRDLEAAVTKLKAYIDLDNIEIDIEIVEKIIKEIIIYEKETTNEPNNKINIENIKKILLRELKITHKDIEGHSKKPEITKARHIYAYLLRNFTELSTVEIGKIIGGKTHSTVLYSINKIDRDRNNDKEINNLITELMNKIKKN.

The segment at 1–79 is domain I, interacts with DnaA modulators; the sequence is MEKSKNIWSL…GYNNIVIVFT (79 aa). A domain II region spans residues 79 to 142; the sequence is TNQPPKTHSN…EEEPTNFKNP (64 aa). The segment at 143–359 is domain III, AAA+ region; the sequence is FLKKRYTFEN…AAVTKLKAYI (217 aa). ATP contacts are provided by Gly187, Gly189, Lys190, and Thr191. The domain IV, binds dsDNA stretch occupies residues 360–487; the sequence is DLDNIEIDIE…TELMNKIKKN (128 aa).

Belongs to the DnaA family. As to quaternary structure, oligomerizes as a right-handed, spiral filament on DNA at oriC.

The protein localises to the cytoplasm. Plays an essential role in the initiation and regulation of chromosomal replication. ATP-DnaA binds to the origin of replication (oriC) to initiate formation of the DNA replication initiation complex once per cell cycle. Binds the DnaA box (a 9 base pair repeat at the origin) and separates the double-stranded (ds)DNA. Forms a right-handed helical filament on oriC DNA; dsDNA binds to the exterior of the filament while single-stranded (ss)DNA is stabiized in the filament's interior. The ATP-DnaA-oriC complex binds and stabilizes one strand of the AT-rich DNA unwinding element (DUE), permitting loading of DNA polymerase. After initiation quickly degrades to an ADP-DnaA complex that is not apt for DNA replication. Binds acidic phospholipids. This chain is Chromosomal replication initiator protein DnaA, found in Borreliella burgdorferi (strain ZS7) (Borrelia burgdorferi).